A 132-amino-acid polypeptide reads, in one-letter code: Small ribosomal subunit protein uS8 (132 aa).

It belongs to the universal ribosomal protein uS8 family. Part of the 30S ribosomal subunit. Contacts proteins S5 and S12.

In terms of biological role, one of the primary rRNA binding proteins, it binds directly to 16S rRNA central domain where it helps coordinate assembly of the platform of the 30S subunit. The polypeptide is Small ribosomal subunit protein uS8 (Syntrophobacter fumaroxidans (strain DSM 10017 / MPOB)).